Consider the following 163-residue polypeptide: Small ribosomal subunit protein bS18c (163 aa).

Disordered stretches follow at residues 1-52 (MYIS…IGPG) and 144-163 (NLRN…SSDC). The segment covering 7 to 48 (PFRKSKQPFRKSKQTFHKSKQPFRKFKQPFRKSKQPFRRRSR) has biased composition (basic residues).

Belongs to the bacterial ribosomal protein bS18 family. Part of the 30S ribosomal subunit.

It is found in the plastid. The protein localises to the chloroplast. This Sorghum bicolor (Sorghum) protein is Small ribosomal subunit protein bS18c.